We begin with the raw amino-acid sequence, 401 residues long: CCA-adding enzyme (401 aa).

ATP-binding residues include G32 and R35. CTP is bound by residues G32 and R35. Mg(2+) contacts are provided by D45 and D47. ATP contacts are provided by R116, D159, R162, R165, and R168. CTP contacts are provided by R116, D159, R162, R165, and R168.

The protein belongs to the tRNA nucleotidyltransferase/poly(A) polymerase family. Bacterial CCA-adding enzyme type 3 subfamily. Homodimer. Mg(2+) is required as a cofactor.

The enzyme catalyses a tRNA precursor + 2 CTP + ATP = a tRNA with a 3' CCA end + 3 diphosphate. The catalysed reaction is a tRNA with a 3' CCA end + 2 CTP + ATP = a tRNA with a 3' CCACCA end + 3 diphosphate. Functionally, catalyzes the addition and repair of the essential 3'-terminal CCA sequence in tRNAs without using a nucleic acid template. Adds these three nucleotides in the order of C, C, and A to the tRNA nucleotide-73, using CTP and ATP as substrates and producing inorganic pyrophosphate. tRNA 3'-terminal CCA addition is required both for tRNA processing and repair. Also involved in tRNA surveillance by mediating tandem CCA addition to generate a CCACCA at the 3' terminus of unstable tRNAs. While stable tRNAs receive only 3'-terminal CCA, unstable tRNAs are marked with CCACCA and rapidly degraded. In Streptococcus mutans serotype c (strain ATCC 700610 / UA159), this protein is CCA-adding enzyme.